Reading from the N-terminus, the 436-residue chain is Probable sodium/metabolite cotransporter BASS4, chloroplastic (436 aa).

The transit peptide at 1 to 47 directs the protein to the chloroplast; the sequence is MAIASTLASTQNPFLCLRQPPSPGNRSVVFRRCQDPCGRRWISRSIR. The next 9 membrane-spanning stretches (helical) occupy residues 109-129, 131-151, 157-177, 195-215, 225-245, 257-277, 297-314, 328-348, and 403-423; these read FLPL…TLGC, ADKY…SGLT, IGAA…ILLL, LVTG…GVAL, LALA…PFWV, FPTD…LIIG, LFSK…WIQV, VFLA…AFNA, and PCVA…NLWL.

This sequence belongs to the bile acid:sodium symporter (BASS) (TC 2.A.28) family.

Its subcellular location is the membrane. It is found in the plastid. The protein resides in the chloroplast envelope. May function as sodium-coupled metabolite transporter across the chloroplast envelope. The chain is Probable sodium/metabolite cotransporter BASS4, chloroplastic (BASS4) from Arabidopsis thaliana (Mouse-ear cress).